Here is a 243-residue protein sequence, read N- to C-terminus: Segregation and condensation protein A (243 aa).

This sequence belongs to the ScpA family. In terms of assembly, component of a cohesin-like complex composed of ScpA, ScpB and the Smc homodimer, in which ScpA and ScpB bind to the head domain of Smc. The presence of the three proteins is required for the association of the complex with DNA.

The protein resides in the cytoplasm. Its function is as follows. Participates in chromosomal partition during cell division. May act via the formation of a condensin-like complex containing Smc and ScpB that pull DNA away from mid-cell into both cell halves. The sequence is that of Segregation and condensation protein A from Thermoanaerobacter pseudethanolicus (strain ATCC 33223 / 39E) (Clostridium thermohydrosulfuricum).